The sequence spans 282 residues: D-alanine aminotransferase (282 aa).

Tyrosine 32 lines the substrate pocket. Arginine 51 lines the pyridoxal 5'-phosphate pocket. Residues arginine 99 and histidine 101 each coordinate substrate. Lysine 146 functions as the Proton acceptor in the catalytic mechanism. At lysine 146 the chain carries N6-(pyridoxal phosphate)lysine. Glutamate 178 contributes to the pyridoxal 5'-phosphate binding site.

The protein belongs to the class-IV pyridoxal-phosphate-dependent aminotransferase family. In terms of assembly, homodimer. Requires pyridoxal 5'-phosphate as cofactor.

It catalyses the reaction D-alanine + 2-oxoglutarate = D-glutamate + pyruvate. Its function is as follows. Acts on the D-isomers of alanine, leucine, aspartate, glutamate, aminobutyrate, norvaline and asparagine. The enzyme transfers an amino group from a substrate D-amino acid to the pyridoxal phosphate cofactor to form pyridoxamine and an alpha-keto acid in the first half-reaction. The second half-reaction is the reverse of the first, transferring the amino group from the pyridoxamine to a second alpha-keto acid to form the product D-amino acid via a ping-pong mechanism. This is an important process in the formation of D-alanine and D-glutamate, which are essential bacterial cell wall components. The polypeptide is D-alanine aminotransferase (dat) (Staphylococcus aureus (strain MSSA476)).